We begin with the raw amino-acid sequence, 371 residues long: tRNA-specific 2-thiouridylase MnmA (371 aa).

ATP is bound by residues 14 to 21 and Met-40; that span reads GMSGGVDS. Residues 100–102 form an interaction with target base in tRNA region; that stretch reads NPD. Catalysis depends on Cys-105, which acts as the Nucleophile. Cys-105 and Cys-205 are disulfide-bonded. Gly-129 serves as a coordination point for ATP. Residues 155–157 are interaction with tRNA; it reads KDQ. Cys-205 serves as the catalytic Cysteine persulfide intermediate. The tract at residues 321–322 is interaction with tRNA; it reads RY.

It belongs to the MnmA/TRMU family.

The protein localises to the cytoplasm. The enzyme catalyses S-sulfanyl-L-cysteinyl-[protein] + uridine(34) in tRNA + AH2 + ATP = 2-thiouridine(34) in tRNA + L-cysteinyl-[protein] + A + AMP + diphosphate + H(+). Functionally, catalyzes the 2-thiolation of uridine at the wobble position (U34) of tRNA, leading to the formation of s(2)U34. The chain is tRNA-specific 2-thiouridylase MnmA from Bordetella parapertussis (strain 12822 / ATCC BAA-587 / NCTC 13253).